The chain runs to 166 residues: Lipoprotein signal peptidase (166 aa).

A run of 3 helical transmembrane segments spans residues tryptophan 12 to glutamine 32, tryptophan 70 to alanine 90, and alanine 102 to valine 122. Catalysis depends on residues aspartate 123 and aspartate 141. Residues serine 142–alanine 162 form a helical membrane-spanning segment.

The protein belongs to the peptidase A8 family.

It is found in the cell inner membrane. It carries out the reaction Release of signal peptides from bacterial membrane prolipoproteins. Hydrolyzes -Xaa-Yaa-Zaa-|-(S,diacylglyceryl)Cys-, in which Xaa is hydrophobic (preferably Leu), and Yaa (Ala or Ser) and Zaa (Gly or Ala) have small, neutral side chains.. Its pathway is protein modification; lipoprotein biosynthesis (signal peptide cleavage). This protein specifically catalyzes the removal of signal peptides from prolipoproteins. The polypeptide is Lipoprotein signal peptidase (Enterobacter sp. (strain 638)).